Reading from the N-terminus, the 91-residue chain is Cell division protein CrgA (91 aa).

Polar residues predominate over residues 1–24 (MPKSKITTEGSALPQSSSSATNRT). The interval 1–28 (MPKSKITTEGSALPQSSSSATNRTPVKI) is disordered. The next 2 membrane-spanning stretches (helical) occupy residues 38–58 (IAIM…NYLA) and 68–88 (LGPW…LMTM).

The protein belongs to the CrgA family.

The protein resides in the cell membrane. Involved in cell division. This chain is Cell division protein CrgA, found in Corynebacterium aurimucosum (strain ATCC 700975 / DSM 44827 / CIP 107346 / CN-1) (Corynebacterium nigricans).